The chain runs to 247 residues: Probable transcriptional regulatory protein GM21_0933 (247 aa).

Belongs to the TACO1 family.

Its subcellular location is the cytoplasm. This chain is Probable transcriptional regulatory protein GM21_0933, found in Geobacter sp. (strain M21).